The sequence spans 278 residues: Truncated FRIGIDA-like protein 1 (278 aa).

Residues 1–36 (MTASETIATAINQIDEKKEKLKKAFDDLQAHRSLLS) adopt a coiled-coil conformation.

Belongs to the Frigida family.

Functionally, truncated inactive FRIGIDA-like 1 protein. The polypeptide is Truncated FRIGIDA-like protein 1 (FRL1) (Arabidopsis thaliana (Mouse-ear cress)).